The chain runs to 264 residues: Zinc transporter ZupT (264 aa).

A run of 5 helical transmembrane segments spans residues 8–28, 36–56, 75–95, 121–141, and 148–168; these read AFILTALAGLSTGIGSLIAFV, FLSVSLGFSAGVMIYVSMIEI, WLTVLAFFGGILLIAIIDKLI, GLMTAIAIGIHNFPEGLATFI, and SIAIPIVIAIAIHNIPEGIAV. Fe(2+) contacts are provided by Asn-132 and Glu-135. Zn(2+)-binding residues include Glu-135 and His-160. Asn-161, Glu-164, and Glu-193 together coordinate Fe(2+). Residue Glu-164 participates in Zn(2+) binding. 3 helical membrane passes run 197–217, 219–239, and 244–264; these read AIIGWFLLMPIMNNIVYGAIF, AVAGIMVFISLDELLPAAEEY, and LAIYGVISGMLIMAVSLLLFI.

It belongs to the ZIP transporter (TC 2.A.5) family. ZupT subfamily.

It localises to the cell membrane. The catalysed reaction is Zn(2+)(in) = Zn(2+)(out). Its function is as follows. Mediates zinc uptake. May also transport other divalent cations. This is Zinc transporter ZupT from Streptococcus mutans serotype c (strain ATCC 700610 / UA159).